The chain runs to 370 residues: 3-isopropylmalate dehydrogenase (370 aa).

An NAD(+)-binding site is contributed by 77-90 (GPKWDSVPYEVRPE). Positions 97, 107, 135, and 226 each coordinate substrate. 3 residues coordinate Mg(2+): Asp226, Asp250, and Asp254. An NAD(+)-binding site is contributed by 290–302 (GSAPDIAGQGLAN).

This sequence belongs to the isocitrate and isopropylmalate dehydrogenases family. LeuB type 1 subfamily. Homodimer. Mg(2+) serves as cofactor. Requires Mn(2+) as cofactor.

The protein localises to the cytoplasm. It carries out the reaction (2R,3S)-3-isopropylmalate + NAD(+) = 4-methyl-2-oxopentanoate + CO2 + NADH. Its pathway is amino-acid biosynthesis; L-leucine biosynthesis; L-leucine from 3-methyl-2-oxobutanoate: step 3/4. In terms of biological role, catalyzes the oxidation of 3-carboxy-2-hydroxy-4-methylpentanoate (3-isopropylmalate) to 3-carboxy-4-methyl-2-oxopentanoate. The product decarboxylates to 4-methyl-2 oxopentanoate. In Nitrobacter winogradskyi (strain ATCC 25391 / DSM 10237 / CIP 104748 / NCIMB 11846 / Nb-255), this protein is 3-isopropylmalate dehydrogenase.